The following is a 651-amino-acid chain: Bromodomain-containing protein 7 (651 aa).

A Glycyl lysine isopeptide (Lys-Gly) (interchain with G-Cter in SUMO2) cross-link involves residue lysine 21. Residues 34–103 (VTELSTGSSG…RDRAENEVDR (70 aa)) are disordered. The segment covering 35–45 (TELSTGSSGHD) has biased composition (polar residues). Residues 47–57 (SLFEDRSDHDK) show a composition bias toward basic and acidic residues. Positions 58 to 69 (HKDRKRKKRKKG) are enriched in basic residues. Residues 65 to 96 (KRKKGEKQAPGEEKGRKRRRVKEDKKKRDRDR) carry the Nuclear localization signal motif. Over residues 70 to 103 (EKQAPGEEKGRKRRRVKEDKKKRDRDRAENEVDR) the composition is skewed to basic and acidic residues. Residues lysine 127, lysine 186, lysine 197, lysine 201, lysine 212, and lysine 241 each participate in a glycyl lysine isopeptide (Lys-Gly) (interchain with G-Cter in SUMO2) cross-link. The Bromo domain occupies 131-235 (VEQTPLQEAL…HSGMKILSQE (105 aa)). Residues 252–316 (KTRKQKERTD…RSSNSEREHE (65 aa)) form a disordered region. A phosphoserine mark is found at serine 279 and serine 289. Residues 290–316 (PAKDNKRKDKDVLEDKWRSSNSEREHE) are compositionally biased toward basic and acidic residues. Residue lysine 305 forms a Glycyl lysine isopeptide (Lys-Gly) (interchain with G-Cter in SUMO2) linkage. Position 328 is an N6-acetyllysine (lysine 328). Lysine 344 is covalently cross-linked (Glycyl lysine isopeptide (Lys-Gly) (interchain with G-Cter in SUMO2)). The residue at position 380 (serine 380) is a Phosphoserine. Lysine 389 is covalently cross-linked (Glycyl lysine isopeptide (Lys-Gly) (interchain with G-Cter in SUMO2)). Phosphoserine occurs at positions 475, 482, and 483. The stretch at 536–567 (SEEAEVFQRKLDETTRLLRELQEAQNERLSTR) forms a coiled coil. At serine 621 the chain carries Phosphoserine.

Interacts with IRF2 and HNRPUL1. Interacts (via N-terminus) with TP53. Interacts (via C-terminus) with EP300. Interacts with BRCA1. Interacts (via bromo domain) with histone H3 (via N-terminus) acetylated at 'Lys-14' (H3K14ac). Has low affinity for histone H3 acetylated at 'Lys-9' (H3K9ac). Has the highest affinity for histone H3 that is acetylated both at 'Lys-9' (H3K9ac) and at 'Lys-14' (H3K14ac). Has very low affinity for non-acetylated histone H3. Interacts (via bromo domain) with histone H4 (via N-terminus) acetylated at 'Lys-8' (H3K8ac) (in vitro). Interacts with TRIM24, PTPN13 and DVL1. Identified in a complex with SMARCA4/BRG1, SMARCC1/BAF155, SMARCE1/BAF57, DPF2/BAF45D and ARID2, subunits of the SWI/SNF-B (PBAF) chromatin remodeling complex. In terms of tissue distribution, ubiquitous.

It localises to the nucleus. The protein resides in the chromosome. In terms of biological role, acts both as coactivator and as corepressor. May play a role in chromatin remodeling. Transcriptional corepressor that down-regulates the expression of target genes. Binds to target promoters, leading to increased histone H3 acetylation at 'Lys-9' (H3K9ac). Binds to the ESR1 promoter. Recruits BRCA1 and POU2F1 to the ESR1 promoter. Coactivator for TP53-mediated activation of transcription of a set of target genes. Required for TP53-mediated cell-cycle arrest in response to oncogene activation. Promotes acetylation of TP53 at 'Lys-382', and thereby promotes efficient recruitment of TP53 to target promoters. Inhibits cell cycle progression from G1 to S phase. Activator of the Wnt signaling pathway in a DVL1-dependent manner by negatively regulating the GSK3B phosphotransferase activity. Induces dephosphorylation of GSK3B at 'Tyr-216'. Down-regulates TRIM24-mediated activation of transcriptional activation by AR. The protein is Bromodomain-containing protein 7 (Brd7) of Mus musculus (Mouse).